A 303-amino-acid polypeptide reads, in one-letter code: UDP-3-O-acyl-N-acetylglucosamine deacetylase (303 aa).

Residues His-78, His-237, and Asp-241 each contribute to the Zn(2+) site. The Proton donor role is filled by His-264.

This sequence belongs to the LpxC family. Requires Zn(2+) as cofactor.

The catalysed reaction is a UDP-3-O-[(3R)-3-hydroxyacyl]-N-acetyl-alpha-D-glucosamine + H2O = a UDP-3-O-[(3R)-3-hydroxyacyl]-alpha-D-glucosamine + acetate. It participates in glycolipid biosynthesis; lipid IV(A) biosynthesis; lipid IV(A) from (3R)-3-hydroxytetradecanoyl-[acyl-carrier-protein] and UDP-N-acetyl-alpha-D-glucosamine: step 2/6. In terms of biological role, catalyzes the hydrolysis of UDP-3-O-myristoyl-N-acetylglucosamine to form UDP-3-O-myristoylglucosamine and acetate, the committed step in lipid A biosynthesis. This is UDP-3-O-acyl-N-acetylglucosamine deacetylase from Pseudomonas fluorescens (strain SBW25).